Reading from the N-terminus, the 762-residue chain is MASLLQDQLTTDQDLLLMQEGMPMRKVRSKSWKKLRYFRLQNDGMTVWHARQARGSAKPSFSISDVDTIRNGHDSELLRSLAEELPLEQGFTVVFHGRRSNLDLVANSVEEAQMWMRGLQLLVDLVTSMDHQERLDQWLSDWFQRGDKNQDGKMSFQEVQRLLHLMNVEMDQEYAFSLFQAADTSQSGTLEGEEFVQFYKALTKRAEVQELFESFSADGQKLTLLEFLDFLREEQKERDCTSELALELIDHYEPSDSGKLRHVLSMDGFLSYLCSKDGDIFNPACLPIYQDMTQPLNHYFICSSHNTYLVGDQLCGQSSVEGYIRALKRGCRCVEVDVWDGPSGEPVVYHGHTLTSRILFKDVVATVAQYAFQTSDYPVILSLETHCSWEQQQTMARHLTEILGEQLLSTTLDGVLPTQLPSPEELRRRILVKGKKLTLEEDLEYEEEEAEPELEESELALESQFETEPEPQEQNLQSKDKKKKSKPILCPALSSLVIYLKSVSFRSFTHSKEHYHFYEISSFSETKAERLIKEAGNEFVQHNTWQLSRVYPSGLRTDSSNYNPQELWNAGCQMVAMNMQTAGLEMDICDGHFRQNGGCGYVLKPDFLRDIQSSFHPERPISPFKAQTLLIQVISGQQLPKVDKTKEGSIVDPLVKVQIFGVRLDTARQETNYVENNGFNPYWGETLCFRVLVPELAMLRFVVMDYDWKSRNDFIGQYTLPWTCMQQGYRHIHLLSKVGISLRPASIFVYICIQEDLEGDES.

The 109-residue stretch at 16–124 (LLMQEGMPMR…WMRGLQLLVD (109 aa)) folds into the PH domain. The substrate binding stretch occupies residues 26–53 (KVRSKSWKKLRYFRLQNDGMTVWHARQA). 3 consecutive EF-hand domains span residues 134 to 169 (RLDQ…MNVE), 170 to 205 (MDQE…LTKR), and 206 to 237 (AEVQ…EQKE). Ca(2+)-binding residues include D147, N149, D151, K153, E158, D183, S185, S187, T189, and E194. The GBA motif lies at 213 to 243 (ESFSADGQKLTLLEFLDFLREEQKERDCTSE). The region spanning 290-435 (QDMTQPLNHY…LRRRILVKGK (146 aa)) is the PI-PLC X-box domain. Residue H305 is part of the active site. Ca(2+) contacts are provided by N306, E335, and D337. The active site involves H350. Residue E384 coordinates Ca(2+). Substrate contacts are provided by K433 and K435. Residues 443–471 (LEYEEEEAEPELEESELALESQFETEPEP) show a composition bias toward acidic residues. Positions 443-483 (LEYEEEEAEPELEESELALESQFETEPEPQEQNLQSKDKKK) are disordered. Residue S457 is modified to Phosphoserine. The 117-residue stretch at 493-609 (LSSLVIYLKS…GYVLKPDFLR (117 aa)) folds into the PI-PLC Y-box domain. The substrate site is built by S522 and R549. A C2 domain is found at 609 to 736 (RDIQSSFHPE…QGYRHIHLLS (128 aa)). 6 residues coordinate Ca(2+): I650, D652, N676, D705, Y706, and D707. Residues 731–734 (HIHL) carry the PDZ-binding motif.

Interacts with GRIP1. Interacts (via GBA motif) with guanine nucleotide-binding protein G(i) alpha subunit GNAI3 (inactive GDP-bound form); low-affinity interaction. The cofactor is Ca(2+).

Its subcellular location is the membrane. It is found in the nucleus. The protein localises to the cytoplasm. It localises to the endoplasmic reticulum. The catalysed reaction is a 1,2-diacyl-sn-glycero-3-phospho-(1D-myo-inositol-4,5-bisphosphate) + H2O = 1D-myo-inositol 1,4,5-trisphosphate + a 1,2-diacyl-sn-glycerol + H(+). It catalyses the reaction a 1,2-diacyl-sn-glycero-3-phospho-(1D-myo-inositol) + H2O = 1D-myo-inositol 1-phosphate + a 1,2-diacyl-sn-glycerol + H(+). Hydrolyzes the phosphatidylinositol 4,5-bisphosphate (PIP2) to generate 2 second messenger molecules diacylglycerol (DAG) and inositol 1,4,5-trisphosphate (IP3). DAG mediates the activation of protein kinase C (PKC), while IP3 releases Ca(2+) from intracellular stores. Required for acrosome reaction in sperm during fertilization, probably by acting as an important enzyme for intracellular Ca(2+) mobilization in the zona pellucida-induced acrosome reaction. May play a role in cell growth. Modulates the liver regeneration in cooperation with nuclear PKC. Overexpression up-regulates the Erk signaling pathway and proliferation. The sequence is that of 1-phosphatidylinositol 4,5-bisphosphate phosphodiesterase delta-4 (PLCD4) from Pongo abelii (Sumatran orangutan).